The following is a 167-amino-acid chain: Lipoprotein signal peptidase (167 aa).

2 helical membrane-spanning segments follow: residues 56–76 (FAPPFVLLMLTGAIVLGVLVF) and 84–104 (TPIFLSAFGLIAGGGIGNMID). Active-site residues include aspartate 113 and aspartate 139. Residues 132-152 (WPIFNVADSAITIGACMLVLF) traverse the membrane as a helical segment.

Belongs to the peptidase A8 family.

Its subcellular location is the cell inner membrane. The enzyme catalyses Release of signal peptides from bacterial membrane prolipoproteins. Hydrolyzes -Xaa-Yaa-Zaa-|-(S,diacylglyceryl)Cys-, in which Xaa is hydrophobic (preferably Leu), and Yaa (Ala or Ser) and Zaa (Gly or Ala) have small, neutral side chains.. It functions in the pathway protein modification; lipoprotein biosynthesis (signal peptide cleavage). This protein specifically catalyzes the removal of signal peptides from prolipoproteins. This chain is Lipoprotein signal peptidase, found in Chlorobium luteolum (strain DSM 273 / BCRC 81028 / 2530) (Pelodictyon luteolum).